The following is a 180-amino-acid chain: MSRVGKLPVKIPEKVKVSVDGNVVKVEGPKGKMHFPTNPLVSVQVDKGEVKVARQDESHVAKGLHGLTRTLVKNALEGVVKGYEKGLEINGVGFKAEVKGKEIHFTLGFSHPVVFKLPDGVTAEVDAKQTKLTIRSVDKHLLGLTAAKVRALRPPEPYKGKGIKYADETIRRKEGKTGAA.

It belongs to the universal ribosomal protein uL6 family. In terms of assembly, part of the 50S ribosomal subunit.

This protein binds to the 23S rRNA, and is important in its secondary structure. It is located near the subunit interface in the base of the L7/L12 stalk, and near the tRNA binding site of the peptidyltransferase center. This Anaeromyxobacter dehalogenans (strain 2CP-1 / ATCC BAA-258) protein is Large ribosomal subunit protein uL6.